Here is a 456-residue protein sequence, read N- to C-terminus: Exodeoxyribonuclease 7 large subunit (456 aa).

Belongs to the XseA family. As to quaternary structure, heterooligomer composed of large and small subunits.

It localises to the cytoplasm. The catalysed reaction is Exonucleolytic cleavage in either 5'- to 3'- or 3'- to 5'-direction to yield nucleoside 5'-phosphates.. Functionally, bidirectionally degrades single-stranded DNA into large acid-insoluble oligonucleotides, which are then degraded further into small acid-soluble oligonucleotides. The sequence is that of Exodeoxyribonuclease 7 large subunit from Lactobacillus delbrueckii subsp. bulgaricus (strain ATCC 11842 / DSM 20081 / BCRC 10696 / JCM 1002 / NBRC 13953 / NCIMB 11778 / NCTC 12712 / WDCM 00102 / Lb 14).